The primary structure comprises 155 residues: Protein PtsT (155 aa).

The sequence is that of Protein PtsT (ptsT) from Geobacillus stearothermophilus (Bacillus stearothermophilus).